A 1373-amino-acid chain; its full sequence is DNA-directed RNA polymerase subunit beta (1373 aa).

This sequence belongs to the RNA polymerase beta chain family. In terms of assembly, the RNAP catalytic core consists of 2 alpha, 1 beta, 1 beta' and 1 omega subunit. When a sigma factor is associated with the core the holoenzyme is formed, which can initiate transcription.

It carries out the reaction RNA(n) + a ribonucleoside 5'-triphosphate = RNA(n+1) + diphosphate. Its function is as follows. DNA-dependent RNA polymerase catalyzes the transcription of DNA into RNA using the four ribonucleoside triphosphates as substrates. In Rickettsia massiliae (strain Mtu5), this protein is DNA-directed RNA polymerase subunit beta.